The chain runs to 76 residues: DNA-directed RNA polymerase subunit epsilon (76 aa).

Belongs to the RNA polymerase subunit epsilon family. As to quaternary structure, RNAP is composed of a core of 2 alpha, a beta and a beta' subunit. The core is associated with a delta subunit, and at least one of epsilon or omega. When a sigma factor is associated with the core the holoenzyme is formed, which can initiate transcription.

It catalyses the reaction RNA(n) + a ribonucleoside 5'-triphosphate = RNA(n+1) + diphosphate. A non-essential component of RNA polymerase (RNAP). This is DNA-directed RNA polymerase subunit epsilon from Streptococcus mutans serotype c (strain ATCC 700610 / UA159).